A 181-amino-acid chain; its full sequence is TATA-box-binding protein C (181 aa).

2 consecutive repeat copies span residues 5-83 (IANI…LGML) and 99-177 (VENV…QSKV).

This sequence belongs to the TBP family.

Its function is as follows. General factor that plays a role in the activation of archaeal genes transcribed by RNA polymerase. Binds specifically to the TATA box promoter element which lies close to the position of transcription initiation. The polypeptide is TATA-box-binding protein C (tbpC1) (Halobacterium salinarum (strain ATCC 700922 / JCM 11081 / NRC-1) (Halobacterium halobium)).